We begin with the raw amino-acid sequence, 160 residues long: Deoxyuridine 5'-triphosphate nucleotidohydrolase (160 aa).

Ser80, Gly93, Asp96, Tyr99, Lys104, Arg149, Phe154, and Gly155 together coordinate dUMP.

This sequence belongs to the dUTPase family. Homotrimer. Mg(2+) serves as cofactor.

The enzyme catalyses dUTP + H2O = dUMP + diphosphate + H(+). Its pathway is pyrimidine metabolism; dUMP biosynthesis; dUMP from dCTP (dUTP route): step 2/2. In terms of biological role, involved in nucleotide metabolism via production of dUMP, the immediate precursor of thymidine nucleotides, and decreases the intracellular concentration of dUTP so that uracil cannot be incorporated into DNA. This Debaryomyces hansenii (strain ATCC 36239 / CBS 767 / BCRC 21394 / JCM 1990 / NBRC 0083 / IGC 2968) (Yeast) protein is Deoxyuridine 5'-triphosphate nucleotidohydrolase (DUT1).